Reading from the N-terminus, the 141-residue chain is Galactose-6-phosphate isomerase subunit LacA 1 (141 aa).

The protein belongs to the LacAB/RpiB family. In terms of assembly, heteromultimeric protein consisting of LacA and LacB.

The catalysed reaction is aldehydo-D-galactose 6-phosphate = keto-D-tagatose 6-phosphate. It functions in the pathway carbohydrate metabolism; D-galactose 6-phosphate degradation; D-tagatose 6-phosphate from D-galactose 6-phosphate: step 1/1. This is Galactose-6-phosphate isomerase subunit LacA 1 from Streptococcus pyogenes serotype M3 (strain SSI-1).